Here is a 257-residue protein sequence, read N- to C-terminus: Imidazole glycerol phosphate synthase subunit HisF (257 aa).

Residues D11 and D130 contribute to the active site.

It belongs to the HisA/HisF family. In terms of assembly, heterodimer of HisH and HisF.

Its subcellular location is the cytoplasm. The catalysed reaction is 5-[(5-phospho-1-deoxy-D-ribulos-1-ylimino)methylamino]-1-(5-phospho-beta-D-ribosyl)imidazole-4-carboxamide + L-glutamine = D-erythro-1-(imidazol-4-yl)glycerol 3-phosphate + 5-amino-1-(5-phospho-beta-D-ribosyl)imidazole-4-carboxamide + L-glutamate + H(+). It participates in amino-acid biosynthesis; L-histidine biosynthesis; L-histidine from 5-phospho-alpha-D-ribose 1-diphosphate: step 5/9. IGPS catalyzes the conversion of PRFAR and glutamine to IGP, AICAR and glutamate. The HisF subunit catalyzes the cyclization activity that produces IGP and AICAR from PRFAR using the ammonia provided by the HisH subunit. This Shewanella sp. (strain W3-18-1) protein is Imidazole glycerol phosphate synthase subunit HisF.